Here is a 452-residue protein sequence, read N- to C-terminus: Keratin, type II cytoskeletal 80 (452 aa).

Residues 1 to 82 (MACRSCVVGF…DPAVQQLKNQ (82 aa)) are head. Phosphoserine is present on Ser-45. The coil 1A stretch occupies residues 82–118 (QEKEEMKALNDKFASLIGKVQALEQRNQLLETRWSFL). One can recognise an IF rod domain in the interval 83 to 394 (EKEEMKALND…KLVEGEEGRM (312 aa)). The interval 119–135 (QGQDSAIFDLGHLYEEY) is linker 1. Residues 136-227 (QGRLQEELRK…TIYEQELKDL (92 aa)) are coil 1B. The segment at 228–251 (AAQVKDVSVTVGMDSRCHIDLSGI) is linker 12. A coil 2 region spans residues 252–390 (VEEVKAQYDA…ATYRKLVEGE (139 aa)). Residues 391–452 (EGRMDSPSAT…YFSQESEVSE (62 aa)) are tail. Residue Ser-396 is modified to Phosphoserine. Positions 412 to 434 (AASRSGLSKAPSRKKKGSKGPVI) are disordered.

Belongs to the intermediate filament family. In terms of assembly, heterotetramer of two type I and two type II keratins. As to expression, weakly expressed in tongue, but not skin or in any other tissues or organs examined.

The protein is Keratin, type II cytoskeletal 80 (KRT80) of Homo sapiens (Human).